The chain runs to 341 residues: Methionine import ATP-binding protein MetN 1 (341 aa).

Positions 2 to 241 (IEFRQVSKSF…PKTTIAQNFV (240 aa)) constitute an ABC transporter domain. 38 to 45 (GYSGAGKS) is a binding site for ATP.

The protein belongs to the ABC transporter superfamily. Methionine importer (TC 3.A.1.24) family. In terms of assembly, the complex is composed of two ATP-binding proteins (MetN), two transmembrane proteins (MetI) and a solute-binding protein (MetQ).

It localises to the cell membrane. It catalyses the reaction L-methionine(out) + ATP + H2O = L-methionine(in) + ADP + phosphate + H(+). The catalysed reaction is D-methionine(out) + ATP + H2O = D-methionine(in) + ADP + phosphate + H(+). In terms of biological role, part of the ABC transporter complex MetNIQ involved in methionine import. Responsible for energy coupling to the transport system. This chain is Methionine import ATP-binding protein MetN 1, found in Staphylococcus aureus (strain bovine RF122 / ET3-1).